Consider the following 298-residue polypeptide: Type II methyltransferase M.MjaIV (298 aa).

It catalyses the reaction a 2'-deoxyadenosine in DNA + S-adenosyl-L-methionine = an N(6)-methyl-2'-deoxyadenosine in DNA + S-adenosyl-L-homocysteine + H(+). Functionally, a methylase that recognizes the double-stranded sequence 5'-GTNNAC-3', methylates A-5 on both strands, and protects the DNA from cleavage by the MjaIV endonuclease. This Methanocaldococcus jannaschii (strain ATCC 43067 / DSM 2661 / JAL-1 / JCM 10045 / NBRC 100440) (Methanococcus jannaschii) protein is Type II methyltransferase M.MjaIV (mjaIVMP).